A 232-amino-acid chain; its full sequence is Very-long-chain (3R)-3-hydroxyacyl-CoA dehydratase 4 (232 aa).

Residues 1-19 (MGPLALPAWLQPRYRKNAY) lie on the Cytoplasmic side of the membrane. The helical transmembrane segment at 20-40 (LFIYYLIQFCGHSWIFTNMTV) threads the bilayer. Topologically, residues 41–56 (RFFSFGKDSMVDTFYA) are lumenal. Residues 57–77 (IGLVMRLCQSVSLLELLHIYV) form a helical membrane-spanning segment. The Cytoplasmic segment spans residues 78–112 (GIESNHLLPRFLQLTERIIILFVVITSQEEVQEKY). Residues 113–133 (VVCVLFVFWNLLDMVRYTYSM) traverse the membrane as a helical segment. Residues 134–135 (LS) lie on the Lumenal side of the membrane. Residues 136 to 156 (VIGISYAVLTWLSQTLWMPIY) traverse the membrane as a helical segment. Residue Y156 is part of the active site. Residue P157 is a topological domain, cytoplasmic. A helical membrane pass occupies residues 158–178 (LCVLAEAFAIYQSLPYFESFG). The active site involves E163. Residues 179–189 (TYSTKLPFDLS) lie on the Lumenal side of the membrane. The helical transmembrane segment at 190–210 (IYFPYVLKIYLMMLFIGMYFT) threads the bilayer. Residues 211–232 (YSHLYSERRDILGIFPIKKKKM) lie on the Cytoplasmic side of the membrane.

It belongs to the very long-chain fatty acids dehydratase HACD family. As to quaternary structure, may interact with enzymes of the ELO family (including ELOVL1); with those enzymes that mediate condensation, the first of the four steps of the reaction cycle responsible for fatty acids elongation, may be part of a larger fatty acids elongase complex. As to expression, highly expressed in leukocytes, and low expression in heart, spleen, kidney, and placenta.

Its subcellular location is the endoplasmic reticulum membrane. It carries out the reaction a very-long-chain (3R)-3-hydroxyacyl-CoA = a very-long-chain (2E)-enoyl-CoA + H2O. The catalysed reaction is (3R)-hydroxyhexadecanoyl-CoA = (2E)-hexadecenoyl-CoA + H2O. The protein operates within lipid metabolism; fatty acid biosynthesis. Catalyzes the third of the four reactions of the long-chain fatty acids elongation cycle. This endoplasmic reticulum-bound enzymatic process, allows the addition of two carbons to the chain of long- and very long-chain fatty acids/VLCFAs per cycle. This enzyme catalyzes the dehydration of the 3-hydroxyacyl-CoA intermediate into trans-2,3-enoyl-CoA, within each cycle of fatty acid elongation. Thereby, it participates in the production of VLCFAs of different chain lengths that are involved in multiple biological processes as precursors of membrane lipids and lipid mediators. The sequence is that of Very-long-chain (3R)-3-hydroxyacyl-CoA dehydratase 4 from Homo sapiens (Human).